Consider the following 172-residue polypeptide: Large ribosomal subunit protein uL10 (172 aa).

This sequence belongs to the universal ribosomal protein uL10 family. In terms of assembly, part of the ribosomal stalk of the 50S ribosomal subunit. The N-terminus interacts with L11 and the large rRNA to form the base of the stalk. The C-terminus forms an elongated spine to which L12 dimers bind in a sequential fashion forming a multimeric L10(L12)X complex.

In terms of biological role, forms part of the ribosomal stalk, playing a central role in the interaction of the ribosome with GTP-bound translation factors. This Lawsonia intracellularis (strain PHE/MN1-00) protein is Large ribosomal subunit protein uL10.